The chain runs to 1002 residues: Solute carrier family 12 member 3 (1002 aa).

Residues 1–135 (MAELPVTELP…KSPGEPVRFG (135 aa)) are Cytoplasmic-facing. Residue S41 is modified to Phosphoserine. Phosphothreonine is present on T44. S47 carries the phosphoserine modification. Phosphothreonine is present on residues T48, T53, and T58. A phosphoserine mark is found at S71 and S89. T122 carries the phosphothreonine modification. S124 carries the phosphoserine modification. A discontinuously helical membrane pass occupies residues 136-165 (WVKGVMIRCMLNIWGVILYLRLPWITAQAG). L146 and W149 together coordinate Na(+). A helical membrane pass occupies residues 166 to 187 (IVLTWLIILLSVMVTSITGLSI). Residues 188–218 (SAISTNGKVKSGGTYFLISRSLGPELGGSIG) lie on the Cytoplasmic side of the membrane. A helical transmembrane segment spans residues 219-241 (LIFAFANAVGVAMHTVGFAETVR). Over 242–253 (DLLQEYGTPIVD) the chain is Extracellular. 2 helical membrane-spanning segments follow: residues 254–278 (PINDIRIIGVVTVTVLLAISLAGME) and 279–301 (WESKAQVLFFLVIMVSFANYLVG). Over 302–336 (TLIPASEDKASKGFYSYHGDIFVQNLVPDWRGIDG) the chain is Extracellular. The discontinuously helical transmembrane segment at 337–358 (SFFGMFSIFFPSATGILAGANI) threads the bilayer. The chloride site is built by G351, I352, and L353. Over 359–369 (SGDLKDPAVAI) the chain is Cytoplasmic. Residues 370–391 (PKGTLMAIFWTTISYLAISATI) traverse the membrane as a helical segment. Residues 392–451 (GSCVVRDASGDVNDTMTPGPGPCEGLACGYGWNFTECSQQRSCRYGLINYYQTMSMVSAF) lie on the Extracellular side of the membrane. N404 is a glycosylation site (N-linked (GlcNAc...) asparagine). Residues C414 and C419 are joined by a disulfide bond. N424 carries N-linked (GlcNAc...) asparagine glycosylation. Cysteines 428 and 434 form a disulfide. The helical transmembrane segment at 452–475 (APLITAGIFGATLSSALACLVSAA) threads the bilayer. A462, S465, and S466 together coordinate Na(+). Residues 476–505 (KVFQCLCEDQLYPLIGFFGKGYGKNREPVR) are Cytoplasmic-facing. The chain crosses the membrane as a helical span at residues 506–520 (GYLLAYAIAVAFIII). The Extracellular segment spans residues 521 to 525 (AELNT). A helical membrane pass occupies residues 526 to 542 (IAPIISNFFLCSYALIN). Residue Y538 coordinates chloride. Residues 543-565 (FSCFHASITNSPGWRPSFRYYSK) are Cytoplasmic-facing. Transmembrane regions (helical) follow at residues 566-585 (WAALFGAVISVVIMFLLTWW) and 586-597 (AALIAIGVVLFL). Topologically, residues 598 to 1002 (LLYVIYKKPE…QENVLTFYCQ (405 aa)) are cytoplasmic. A scissor helix region spans residues 613 to 628 (SVQAGSYNLALSYSVG). ATP-binding residues include L646, R653, V675, G739, L778, and N779.

This sequence belongs to the SLC12A transporter family. Homodimer; adopts a domain-swap conformation at the scissor helices connecting the transmembrane domain and C-terminal domain. Interacts with KLHL3. Interacts with IL18R1; this interaction is increased by IL18 treatment. In terms of processing, ubiquitinated; ubiquitination is essential for regulation of endocytosis. Post-translationally, phosphorylated at Thr-53, Thr-58 and Ser-71 by OXSR1/OSR1 and STK39/SPAK downstream of WNK4, promoting its activity. Phosphorylated in response to IL18. In terms of tissue distribution, expressed predominantly in kidney, including in distal tubules (at protein level). Detected at low levels in heart, lung and liver. Not detected in normal aorta, but abundantly expressed in fatty streaks and advanced atherosclerotic lesions. In atherosclerotic lesions, expressed in macrophages, smooth muscle cells and endothelial cells (at protein level).

Its subcellular location is the cell membrane. It is found in the apical cell membrane. The enzyme catalyses chloride(out) + Na(+)(out) = chloride(in) + Na(+)(in). Phosphorylation by OXSR1/OSR1 and STK39/SPAK in kidney distal convoluted tubules promotes its activity. Also activated by OXSR1/OSR1 and STK39/SPAK downstream of WNK3. Inhibited by thiazide-type diuretic metolazone. Thiazide drugs, such as polythiazide, specifically inhibit SLC12A3/NCC transporter activity by competing with chloride for binding. Electroneutral sodium and chloride ion cotransporter, which acts as a key mediator of sodium and chloride reabsorption in kidney distal convoluted tubules. Also acts as a receptor for the pro-inflammatory cytokine IL18, thereby contributing to IL18-induced cytokine production, including IFNG, IL6, IL18 and CCL2. May act either independently of IL18R1, or in a complex with IL18R1. This chain is Solute carrier family 12 member 3, found in Mus musculus (Mouse).